The chain runs to 303 residues: Taste receptor type 2 member 13 (303 aa).

Over 1 to 7 (MESALPS) the chain is Extracellular. The helical transmembrane segment at 8–28 (ILTLVIIAEFIIGNLSNGFIV) threads the bilayer. Residues 29–55 (LINYIDWVSKRELSSVDKLLIILAISR) are Cytoplasmic-facing. Residues 56–76 (IGLIWEILVSWFLALHYLAIF) form a helical membrane-spanning segment. Residues 77–85 (VSGTGLRIM) are Extracellular-facing. A helical membrane pass occupies residues 86-106 (IFSWIVSNHFSLWLATILSIF). The Cytoplasmic portion of the chain corresponds to 107 to 128 (YLLKIASFSSPAFLYLKWRVNK). A helical membrane pass occupies residues 129–149 (VILMILLGSLVFLFLNLIQIN). Residues 150-184 (IHIKDWLDRYEGNTTWNFSMSDFVTFSVSVKFTMT) are Extracellular-facing. Asparagine 162 and asparagine 166 each carry an N-linked (GlcNAc...) asparagine glycan. A helical membrane pass occupies residues 185–205 (MFSLTPFTVALISFSLLIFSL). Topologically, residues 206–232 (QKHLQKMQLNYKGHREPRTKVHTNALK) are cytoplasmic. Residues 233–253 (IVISFLLLYASFFLCILISWI) traverse the membrane as a helical segment. Topologically, residues 254–261 (SELYQNTA) are extracellular. A helical transmembrane segment spans residues 262–282 (IYMLCETIGLFYPSSHSFLLI). Topologically, residues 283 to 303 (LGNPKLRQAFLLVAAKVWAKR) are cytoplasmic.

The protein belongs to the G-protein coupled receptor T2R family.

It localises to the membrane. Functionally, receptor that may play a role in the perception of bitterness and is gustducin-linked. May play a role in sensing the chemical composition of the gastrointestinal content. The activity of this receptor may stimulate alpha gustducin, mediate PLC-beta-2 activation and lead to the gating of TRPM5. The polypeptide is Taste receptor type 2 member 13 (TAS2R13) (Pongo pygmaeus (Bornean orangutan)).